The chain runs to 222 residues: Deoxyribose-phosphate aldolase (222 aa).

Aspartate 94 (proton donor/acceptor) is an active-site residue. The Schiff-base intermediate with acetaldehyde role is filled by lysine 156. Residue lysine 185 is the Proton donor/acceptor of the active site.

This sequence belongs to the DeoC/FbaB aldolase family. DeoC type 1 subfamily.

It localises to the cytoplasm. The enzyme catalyses 2-deoxy-D-ribose 5-phosphate = D-glyceraldehyde 3-phosphate + acetaldehyde. It functions in the pathway carbohydrate degradation; 2-deoxy-D-ribose 1-phosphate degradation; D-glyceraldehyde 3-phosphate and acetaldehyde from 2-deoxy-alpha-D-ribose 1-phosphate: step 2/2. Functionally, catalyzes a reversible aldol reaction between acetaldehyde and D-glyceraldehyde 3-phosphate to generate 2-deoxy-D-ribose 5-phosphate. In Malacoplasma penetrans (strain HF-2) (Mycoplasma penetrans), this protein is Deoxyribose-phosphate aldolase.